The following is a 297-amino-acid chain: Succinate dehydrogenase [ubiquinone] iron-sulfur subunit, mitochondrial (297 aa).

Residues Thr33–Pro55 are disordered. The 2Fe-2S ferredoxin-type domain maps to Asp78–Thr157. Positions 117, 122, 125, and 137 each coordinate [2Fe-2S] cluster. The region spanning Asp199 to Tyr229 is the 4Fe-4S ferredoxin-type domain. [4Fe-4S] cluster-binding residues include Cys209, Cys212, and Cys215. Position 219 (Cys219) interacts with [3Fe-4S] cluster. Trp224 provides a ligand contact to a ubiquinone. [3Fe-4S] cluster contacts are provided by Cys266 and Cys272. Cys276 is a [4Fe-4S] cluster binding site.

It belongs to the succinate dehydrogenase/fumarate reductase iron-sulfur protein family. In terms of assembly, component of complex II composed of four subunits: a flavoprotein (FP), an iron-sulfur protein (IP), and a cytochrome b composed of a large and a small subunit. The cofactor is [2Fe-2S] cluster. [3Fe-4S] cluster is required as a cofactor. It depends on [4Fe-4S] cluster as a cofactor.

It is found in the mitochondrion inner membrane. The enzyme catalyses a quinone + succinate = fumarate + a quinol. It functions in the pathway carbohydrate metabolism; tricarboxylic acid cycle; fumarate from succinate (eukaryal route): step 1/1. In terms of biological role, iron-sulfur protein (IP) subunit of succinate dehydrogenase (SDH) that is involved in complex II of the mitochondrial electron transport chain and is responsible for transferring electrons from succinate to ubiquinone (coenzyme Q). This Zymoseptoria tritici (Speckled leaf blotch fungus) protein is Succinate dehydrogenase [ubiquinone] iron-sulfur subunit, mitochondrial (SDH2).